A 534-amino-acid polypeptide reads, in one-letter code: Glycerophosphodiester transporter GIT2 (534 aa).

The next 12 membrane-spanning stretches (helical) occupy residues 63–83 (GAGL…MACL), 96–116 (AISN…LSFG), 135–155 (LIAF…QGFF), 163–183 (FCLG…ASEF), 202–222 (FMID…LWIF), 230–250 (LWRV…FIRL), 289–309 (MIWF…AIIL), 322–342 (WGWS…GAFS), 350–370 (LTLA…SACL), 377–397 (VAAF…GPGG), 417–437 (GIAA…FPAI), and 453–473 (VPFY…FFLC).

This sequence belongs to the major facilitator superfamily. Sugar transporter (TC 2.A.1.1) family.

The protein resides in the cell membrane. Functionally, probable glycerophosphodiester transporter. Does not possess detectable glycerophosphoinositol (GroPIns) transport activity. Might be involved in the uptake of glycerophosphocholine (GroPCho). The expanded ability to utilize GroPIns and GroPCho results from the organism's pathogenic nature and its need to occupy a variety of environments within its host organism. This possibility is buttressed by the fact that GroPIns and GroPCho are present and abundant in human fluids. The polypeptide is Glycerophosphodiester transporter GIT2 (Candida albicans (strain SC5314 / ATCC MYA-2876) (Yeast)).